The primary structure comprises 81 residues: Photosystem I iron-sulfur center (81 aa).

4Fe-4S ferredoxin-type domains follow at residues 2 to 31 (AHTVKIYDTCIGCTQCVRACPTDVLEMVPW) and 39 to 68 (IASAPRTEDCVGCKRCESACPTDFLSIRVY). Cys11, Cys14, Cys17, Cys21, Cys48, Cys51, Cys54, and Cys58 together coordinate [4Fe-4S] cluster.

In terms of assembly, the eukaryotic PSI reaction center is composed of at least 11 subunits. Requires [4Fe-4S] cluster as cofactor.

It is found in the plastid. The protein resides in the cyanelle thylakoid membrane. It carries out the reaction reduced [plastocyanin] + hnu + oxidized [2Fe-2S]-[ferredoxin] = oxidized [plastocyanin] + reduced [2Fe-2S]-[ferredoxin]. Functionally, apoprotein for the two 4Fe-4S centers FA and FB of photosystem I (PSI); essential for photochemical activity. FB is the terminal electron acceptor of PSI, donating electrons to ferredoxin. The C-terminus interacts with PsaA/B/D and helps assemble the protein into the PSI complex. Required for binding of PsaD and PsaE to PSI. PSI is a cytochrome c6-ferredoxin oxidoreductase, converting photonic excitation into a charge separation, which transfers an electron from the donor P700 chlorophyll pair to the spectroscopically characterized acceptors A0, A1, FX, FA and FB in turn. The sequence is that of Photosystem I iron-sulfur center from Cyanophora paradoxa.